We begin with the raw amino-acid sequence, 77 residues long: Adipokinetic prohormone type 3 (77 aa).

A signal peptide spans 1–22; the sequence is MQVRAVLVLAVVALVAVATSRA. Gln23 bears the Pyrrolidone carboxylic acid mark. Trp30 carries the post-translational modification Tryptophan amide.

Belongs to the AKH/HRTH/RPCH family.

The protein localises to the secreted. This hormone, released from cells in the corpora cardiaca, causes release of diglycerides from the fat body and stimulation of muscles to use these diglycerides as an energy source during energy-demanding processes. This chain is Adipokinetic prohormone type 3, found in Locusta migratoria (Migratory locust).